The following is a 687-amino-acid chain: DNA-directed RNA polymerase subunit beta' (687 aa).

Positions 69, 71, 87, and 90 each coordinate Zn(2+). Residues aspartate 493, aspartate 495, and aspartate 497 each coordinate Mg(2+).

Belongs to the RNA polymerase beta' chain family. RpoC1 subfamily. In plastids the minimal PEP RNA polymerase catalytic core is composed of four subunits: alpha, beta, beta', and beta''. When a (nuclear-encoded) sigma factor is associated with the core the holoenzyme is formed, which can initiate transcription. Requires Mg(2+) as cofactor. Zn(2+) serves as cofactor.

It is found in the plastid. The protein resides in the chloroplast. It carries out the reaction RNA(n) + a ribonucleoside 5'-triphosphate = RNA(n+1) + diphosphate. In terms of biological role, DNA-dependent RNA polymerase catalyzes the transcription of DNA into RNA using the four ribonucleoside triphosphates as substrates. The chain is DNA-directed RNA polymerase subunit beta' from Angiopteris evecta (Mule's foot fern).